Consider the following 563-residue polypeptide: uncharacterized protein (563 aa).

The segment at residues cysteine 19–cysteine 45 is a DNA-binding region (zn(2)-C6 fungal-type). The tract at residues asparagine 56 to proline 78 is disordered. Polar residues predominate over residues serine 64–glutamate 75.

Its subcellular location is the nucleus. This is an uncharacterized protein from Schizosaccharomyces pombe (strain 972 / ATCC 24843) (Fission yeast).